Consider the following 510-residue polypeptide: Beta-1,4 N-acetylgalactosaminyltransferase 2 (510 aa).

Over 1–15 (MTSSVSFASFRFPWL) the chain is Cytoplasmic. A helical; Signal-anchor for type II membrane protein transmembrane segment spans residues 16 to 32 (LKTFVLMVGLATVAFMV). The Lumenal portion of the chain corresponds to 33–510 (RKVSLTTDFS…YFKNHLYCST (478 aa)). Asn390 carries an N-linked (GlcNAc...) asparagine glycan.

It belongs to the glycosyltransferase 2 family. Homodimer; disulfide-linked.

Its subcellular location is the golgi apparatus. It localises to the trans-Golgi network membrane. The enzyme catalyses an N-acetyl-alpha-neuraminyl-(2-&gt;3)-beta-D-galactosyl derivative + UDP-N-acetyl-alpha-D-galactosamine = an N-acetyl-beta-D-galactosaminyl-(1-&gt;4)-[N-acetyl-alpha-neuraminyl-(2-&gt;3)]-beta-D-galactosyl derivative + UDP + H(+). The catalysed reaction is a 3-O-{alpha-Neu5Ac-(2-&gt;3)-beta-D-Gal-(1-&gt;3)-[alpha-Neu5Ac-(2-&gt;6)]-alpha-D-GalNAc}-L-seryl-[protein] + UDP-N-acetyl-alpha-D-galactosamine = a 3-O-{[alpha-Neu5Ac-(2-&gt;3)]-beta-D-GalNAc-(1-&gt;4)-beta-D-Gal-(1-&gt;3)-[alpha-Neu5Ac-(2-&gt;6)]-alpha-D-GalNAc}-L-seryl-[protein] + UDP + H(+). It carries out the reaction a 3-O-{alpha-Neu5Ac-(2-&gt;3)-beta-D-Gal-(1-&gt;3)-[alpha-Neu5Ac-(2-&gt;6)]-alpha-D-GalNAc}-L-threonyl-[protein] + UDP-N-acetyl-alpha-D-galactosamine = a 3-O-{[alpha-Neu5Ac-(2-&gt;3)]-beta-D-GalNAc-(1-&gt;4)-beta-D-Gal-(1-&gt;3)-[alpha-Neu5Ac-(2-&gt;6)]-alpha-D-GalNAc}-L-threonyl-[protein] + UDP + H(+). It catalyses the reaction a neolactoside IV(3)-alpha-NeuAc-nLc4Cer + UDP-N-acetyl-alpha-D-galactosamine = a neolactoside IV(4)-GalNAc,IV(3)-alpha-NeuAc-nLc4Cer + UDP + H(+). It participates in protein modification; protein glycosylation. Its pathway is glycolipid biosynthesis. Functionally, beta-1,4 N-acetylgalactosaminyltransferase involved in the biosynthesis of T-lymphocyte CT glycan antigen carried by CD45 family of protein phosphatases. Catalyzes the transfer of N-acetylgalactosamine (GalNAc) group in a beta-1,4-linkage from UDP-GalNAc to the galactose residue of NeuAcalpha2-&gt;3Gal-R to form GalNAcbeta1-&gt;4(NeuAcalpha2-&gt;3)Gal-R glycan epitope. In Mus musculus (Mouse), this protein is Beta-1,4 N-acetylgalactosaminyltransferase 2.